Reading from the N-terminus, the 146-residue chain is MKKLLLVNGPNLNRLGVREVNVYGKGTLATLEADMKQEAETMGVELECFQSNHEGAIIDIIHEAEDIYEGIILNPGAFTHYSYAIRDAIASISIPVIEVHISNIHQRESFRHESVTAAVCAGQIVGFGFYGYKLALFALMEKLRGA.

Y23 serves as the catalytic Proton acceptor. N74, H80, and D87 together coordinate substrate. The active-site Proton donor is the H100. Substrate is bound by residues 101 to 102 (IS) and R111.

Belongs to the type-II 3-dehydroquinase family. As to quaternary structure, homododecamer.

The catalysed reaction is 3-dehydroquinate = 3-dehydroshikimate + H2O. Its pathway is metabolic intermediate biosynthesis; chorismate biosynthesis; chorismate from D-erythrose 4-phosphate and phosphoenolpyruvate: step 3/7. Functionally, catalyzes a trans-dehydration via an enolate intermediate. In Bacillus cereus (strain G9842), this protein is 3-dehydroquinate dehydratase.